Here is a 248-residue protein sequence, read N- to C-terminus: Isopentenyl phosphate kinase (248 aa).

7 to 11 (KLGGS) lines the ATP pocket. Gly49 serves as a coordination point for substrate. Gly50 contacts ATP. Substrate contacts are provided by His54 and Gly152. Residues Gly209 and Lys213 each coordinate ATP.

The protein belongs to the isopentenyl phosphate kinase family. Homodimer.

It carries out the reaction isopentenyl phosphate + ATP = isopentenyl diphosphate + ADP. In terms of biological role, catalyzes the phosphorylation of isopentenyl phosphate (IP) to isopentenyl diphosphate (IPP). Functions in an alternate mevalonate (MVA) pathway leading to IPP, a key precursor for the biosynthesis of isoprenoid compounds such as archaeal membrane lipids. The protein is Isopentenyl phosphate kinase of Haloferax volcanii (strain ATCC 29605 / DSM 3757 / JCM 8879 / NBRC 14742 / NCIMB 2012 / VKM B-1768 / DS2) (Halobacterium volcanii).